A 409-amino-acid chain; its full sequence is Lissencephaly-1 homolog (409 aa).

Residues 7–39 (RRERSNQAIADYLGSNGYTDALEAFRKEADMPN) enclose the LisH domain. Positions 54–81 (TSVIRLQKKVMELEAKLSEAEKEAIEGA) form a coiled coil. WD repeat units follow at residues 104–145 (GHRA…RTLK), 146–185 (GHTD…ECVK), 189–228 (GHDH…CVKT), 231–270 (GHRE…CKAE), 273–332 (EHEN…CLFT), 335–374 (GHDN…CMKT), and 377–409 (AHSH…WECR).

This sequence belongs to the WD repeat LIS1/nudF family.

It is found in the cytoplasm. The protein resides in the cytoskeleton. Its subcellular location is the microtubule organizing center. The protein localises to the centrosome. Positively regulates the activity of the minus-end directed microtubule motor protein dynein. May enhance dynein-mediated microtubule sliding by targeting dynein to the microtubule plus end. Required for several dynein- and microtubule-dependent processes. In Aedes aegypti (Yellowfever mosquito), this protein is Lissencephaly-1 homolog.